Here is a 199-residue protein sequence, read N- to C-terminus: Probable GTP-binding protein EngB (199 aa).

Positions 28-199 (DLPEIALAGR…ESWDTILEYL (172 aa)) constitute an EngB-type G domain. Residues 36–43 (GRSNVGKS), 63–67 (GKTQL), 81–84 (DVPG), 148–151 (TKAD), and 180–182 (FSS) contribute to the GTP site. Residues Ser-43 and Thr-65 each coordinate Mg(2+).

This sequence belongs to the TRAFAC class TrmE-Era-EngA-EngB-Septin-like GTPase superfamily. EngB GTPase family. It depends on Mg(2+) as a cofactor.

Its function is as follows. Necessary for normal cell division and for the maintenance of normal septation. The chain is Probable GTP-binding protein EngB from Streptococcus equi subsp. equi (strain 4047).